The following is a 339-amino-acid chain: UPF0450 protein C17orf58 (339 aa).

The first 17 residues, M1 to P17, serve as a signal peptide directing secretion. The disordered stretch occupies residues P17–E191. Positions V21 to S36 are enriched in basic and acidic residues. The span at A56–W72 shows a compositional bias: low complexity. Residues A112–R125 are compositionally biased toward basic and acidic residues. Residues L132 to P163 show a composition bias toward low complexity. Cystine bridges form between C193/C267, C197/C271, and C208/C338. Positions C193–C338 constitute an NTR domain.

It belongs to the UPF0450 family.

This Homo sapiens (Human) protein is UPF0450 protein C17orf58 (C17orf58).